The sequence spans 403 residues: Riboflavin biosynthesis protein RibBA (403 aa).

A DHBP synthase region spans residues 1 to 204 (MKNKVFASIG…IGELVNYRRR (204 aa)). Residues 30 to 31 (RE), Asp-35, 143 to 147 (RTGHT), and Glu-167 each bind D-ribulose 5-phosphate. Glu-31 provides a ligand contact to Mg(2+). His-146 is a Mg(2+) binding site. The tract at residues 205 to 403 (TEKFISEIVN…EKMGHMLKKV (199 aa)) is GTP cyclohydrolase II. 255 to 259 (RVHSS) serves as a coordination point for GTP. Residues Cys-260, Cys-271, and Cys-273 each coordinate Zn(2+). GTP-binding positions include Gln-276, 298–300 (EGR), and Thr-320. Asp-332 acts as the Proton acceptor; for GTP cyclohydrolase activity in catalysis. The active-site Nucleophile; for GTP cyclohydrolase activity is the Arg-334. GTP contacts are provided by Thr-355 and Lys-360.

This sequence in the N-terminal section; belongs to the DHBP synthase family. It in the C-terminal section; belongs to the GTP cyclohydrolase II family. Requires Mg(2+) as cofactor. It depends on Mn(2+) as a cofactor. Zn(2+) serves as cofactor.

It carries out the reaction D-ribulose 5-phosphate = (2S)-2-hydroxy-3-oxobutyl phosphate + formate + H(+). The catalysed reaction is GTP + 4 H2O = 2,5-diamino-6-hydroxy-4-(5-phosphoribosylamino)-pyrimidine + formate + 2 phosphate + 3 H(+). It functions in the pathway cofactor biosynthesis; riboflavin biosynthesis; 2-hydroxy-3-oxobutyl phosphate from D-ribulose 5-phosphate: step 1/1. The protein operates within cofactor biosynthesis; riboflavin biosynthesis; 5-amino-6-(D-ribitylamino)uracil from GTP: step 1/4. Functionally, catalyzes the conversion of D-ribulose 5-phosphate to formate and 3,4-dihydroxy-2-butanone 4-phosphate. Its function is as follows. Catalyzes the conversion of GTP to 2,5-diamino-6-ribosylamino-4(3H)-pyrimidinone 5'-phosphate (DARP), formate and pyrophosphate. This Endomicrobium trichonymphae protein is Riboflavin biosynthesis protein RibBA.